The sequence spans 163 residues: Cytosolic iron-sulfur assembly component 2B (163 aa).

Belongs to the MIP18 family.

It is found in the nucleus. The protein resides in the cytoplasm. The protein localises to the cytoskeleton. It localises to the spindle. Component of the cytosolic iron-sulfur (Fe/S) protein assembly machinery. Required for the maturation of extramitochondrial Fe/S proteins. May play a role in chromosome segregation through establishment of sister chromatid cohesion. The polypeptide is Cytosolic iron-sulfur assembly component 2B (Dictyostelium discoideum (Social amoeba)).